The following is a 1079-amino-acid chain: Electrogenic sodium bicarbonate cotransporter 1 (1079 aa).

A required for interaction with AHCYL1 region spans residues Met-1–Glu-62. Residues Met-1–Asn-466 lie on the Cytoplasmic side of the membrane. Tyr-30 is modified (phosphotyrosine). The segment covering Tyr-39–Lys-52 has biased composition (basic residues). A disordered region spans residues Tyr-39 to Ser-78. A Phosphothreonine; by PKA modification is found at Thr-49. Positions Glu-53–Val-70 are enriched in basic and acidic residues. A phosphoserine mark is found at Ser-61, Ser-65, Ser-68, Ser-223, Ser-232, Ser-233, and Ser-245. The interval Met-237–Pro-265 is disordered. 2 positions are modified to phosphothreonine: Thr-249 and Thr-254. Residues Arg-251–Asp-260 are compositionally biased toward polar residues. 3 positions are modified to phosphoserine: Ser-256, Ser-257, and Ser-262. Residues Ile-467–Leu-491 traverse the membrane as a helical segment. Over Gly-492–Val-501 the chain is Extracellular. The chain crosses the membrane as a helical span at residues Leu-502–Gly-520. Residue Gln-521 is a topological domain, cytoplasmic. Residues Pro-522–Phe-542 traverse the membrane as a discontinuously helical segment. The Extracellular portion of the chain corresponds to Ser-543 to Tyr-550. Residues Leu-551–Thr-571 form a helical membrane-spanning segment. Topologically, residues Asp-572–Glu-585 are cytoplasmic. Residues Glu-586 to Asp-609 traverse the membrane as a helical segment. The Extracellular segment spans residues Tyr-610–Val-692. Residues Thr-693–Leu-710 traverse the membrane as a helical segment. At Lys-711–Lys-725 the chain is on the cytoplasmic side. The chain crosses the membrane as a helical span at residues Leu-726–Leu-745. Residues Val-746 to Trp-779 are Extracellular-facing. Residues Val-748–Trp-779 are interaction with CA4. Residues Val-780–Asn-807 form a helical membrane-spanning segment. The Cytoplasmic segment spans residues Arg-808–Tyr-819. Residues His-820–Met-836 form a helical membrane-spanning segment. Residue Ala-837 is a topological domain, extracellular. Residues Leu-838–Leu-855 traverse the membrane as a discontinuously helical segment. The Cytoplasmic segment spans residues Lys-856–Arg-877. The chain crosses the membrane as a helical span at residues Val-878–Ala-894. Residues Pro-895–Pro-901 lie on the Extracellular side of the membrane. Residues Met-902–Asn-918 form a helical membrane-spanning segment. Over Gly-919–Cys-960 the chain is Cytoplasmic. An intramembrane region (discontinuously helical) is located at residues Leu-961–Val-986. The Cytoplasmic portion of the chain corresponds to Arg-987–Cys-1079. Residues Leu-1002–Asp-1004 are CA2-binding. The segment at Lys-1012–Cys-1079 is disordered. A Phosphoserine; by PKA modification is found at Ser-1026. The residue at position 1029 (Ser-1029) is a Phosphoserine. The segment at Asp-1030–Asp-1033 is CA2-binding. Phosphoserine occurs at positions 1034 and 1044. The required for basolateral targeting stretch occupies residues Phe-1057–Ser-1059. Residues Lys-1062–Cys-1079 are compositionally biased toward basic and acidic residues. At Ser-1069 the chain carries Phosphoserine.

This sequence belongs to the anion exchanger (TC 2.A.31) family. Homodimer. Interacts with CA2/carbonic anhydrase 2 and CA4/carbonic anhydrase 4 which may regulate transporter activity. Isoform 1 but not isoform 2 interacts with AHCYL1 (via PEST domain when phosphorylated); the interaction increases SLC4A4 isoform 1 activity. Interacts with AHCYL2. Phosphorylation of Ser-1026 by PKA increases the binding of CA2 and changes the Na(+):HCO3(-) stoichiometry of the transporter from 3:1 to 2:1. Phosphorylated in presence of STK39 and dephosphorylated in presence of PP1 phosphatase; phosphorylation seems to inhibit SLC4A4 activity. In terms of processing, N-glycosylated. May not be necessary for the transporter basic functions. Expressed in colonic mucosa, kidney cortex and to gastric mucosa.

The protein resides in the basolateral cell membrane. Its subcellular location is the cell membrane. The enzyme catalyses 2 hydrogencarbonate(out) + Na(+)(out) = 2 hydrogencarbonate(in) + Na(+)(in). It carries out the reaction 3 hydrogencarbonate(out) + Na(+)(out) = 3 hydrogencarbonate(in) + Na(+)(in). In terms of biological role, electrogenic sodium/bicarbonate cotransporter with a Na(+):HCO3(-) stoichiometry varying from 1:2 to 1:3. May regulate bicarbonate influx/efflux at the basolateral membrane of cells and regulate intracellular pH. The polypeptide is Electrogenic sodium bicarbonate cotransporter 1 (SLC4A4) (Oryctolagus cuniculus (Rabbit)).